The following is a 307-amino-acid chain: UDP-N-acetylenolpyruvoylglucosamine reductase (307 aa).

One can recognise an FAD-binding PCMH-type domain in the interval V34–G197. Residue R177 is part of the active site. Residue S226 is the Proton donor of the active site. E296 is a catalytic residue.

Belongs to the MurB family. FAD serves as cofactor.

It is found in the cytoplasm. The catalysed reaction is UDP-N-acetyl-alpha-D-muramate + NADP(+) = UDP-N-acetyl-3-O-(1-carboxyvinyl)-alpha-D-glucosamine + NADPH + H(+). The protein operates within cell wall biogenesis; peptidoglycan biosynthesis. Its function is as follows. Cell wall formation. This chain is UDP-N-acetylenolpyruvoylglucosamine reductase, found in Paramagnetospirillum magneticum (strain ATCC 700264 / AMB-1) (Magnetospirillum magneticum).